Consider the following 689-residue polypeptide: Translation initiation factor IF-2 (689 aa).

The interval 70–107 (VRSKKNSNKKKKKGKGNQDKRQENFAGKQQAQTVETPD) is disordered. Basic residues predominate over residues 71 to 84 (RSKKNSNKKKKKGK). The 170-residue stretch at 191-360 (ERPAVVTIMG…LLVSEVEEYK (170 aa)) folds into the tr-type G domain. Residues 200–207 (GHVDHGKT) are G1. Position 200–207 (200–207 (GHVDHGKT)) interacts with GTP. Residues 225–229 (GITQH) are G2. Positions 246–249 (DTPG) are G3. Residues 246–250 (DTPGH) and 300–303 (NKMD) each bind GTP. Positions 300-303 (NKMD) are G4. A G5 region spans residues 336–338 (SAI).

Belongs to the TRAFAC class translation factor GTPase superfamily. Classic translation factor GTPase family. IF-2 subfamily.

The protein localises to the cytoplasm. Its function is as follows. One of the essential components for the initiation of protein synthesis. Protects formylmethionyl-tRNA from spontaneous hydrolysis and promotes its binding to the 30S ribosomal subunits. Also involved in the hydrolysis of GTP during the formation of the 70S ribosomal complex. The protein is Translation initiation factor IF-2 of Bacillus cytotoxicus (strain DSM 22905 / CIP 110041 / 391-98 / NVH 391-98).